A 350-amino-acid chain; its full sequence is Derriere protein (350 aa).

The first 16 residues, 1–16 (MLSLACFFSFLLMVKS), serve as a signal peptide directing secretion. Residues 17–236 (SPLTFQERML…SSCKTPRAKR (220 aa)) constitute a propeptide that is removed on maturation. Asn171 and Asn202 each carry an N-linked (GlcNAc...) asparagine glycan. Disulfide bonds link Cys249–Cys315, Cys278–Cys347, and Cys282–Cys349.

It belongs to the TGF-beta family. In terms of assembly, homodimer; disulfide-linked. Also forms heterodimers with other TGF-beta family members including nodal2/nr-2 and bmp4.

It localises to the secreted. Functionally, required for posterior mesoderm formation during embryogenesis. Acts indirectly to suppress head formation by altering mesodermal patterning. Also involved in the establishment of left-right axis asymmetry, acting upstream of nodal/nr-1. Can exert long-range effects in the embryo. In Xenopus tropicalis (Western clawed frog), this protein is Derriere protein.